Consider the following 311-residue polypeptide: Homoserine kinase (311 aa).

89 to 99 provides a ligand contact to ATP; sequence PFARGLGSSAT.

The protein belongs to the GHMP kinase family. Homoserine kinase subfamily.

Its subcellular location is the cytoplasm. It carries out the reaction L-homoserine + ATP = O-phospho-L-homoserine + ADP + H(+). Its pathway is amino-acid biosynthesis; L-threonine biosynthesis; L-threonine from L-aspartate: step 4/5. Functionally, catalyzes the ATP-dependent phosphorylation of L-homoserine to L-homoserine phosphate. The polypeptide is Homoserine kinase (Halothermothrix orenii (strain H 168 / OCM 544 / DSM 9562)).